We begin with the raw amino-acid sequence, 193 residues long: MEKKQSILSPIIRITFTFLVLCGLVYPLIVTGIAQAVMKDNADGSLIYNDKNEVIGSKLIGQNFTDPRYFQGRVSSIEYKAEASGSNNYAPSNPDLEKRVEKSIEEWKKQNPSVPVTEVPIDLVTNSGSGLDPDISPKAASVQVDRISKLTDIPKEKLNQLIKDQTEGAALGLFGETRVNVLKLNLALQELMK.

A helical membrane pass occupies residues 14-34; it reads ITFTFLVLCGLVYPLIVTGIA.

The protein belongs to the KdpC family. In terms of assembly, the system is composed of three essential subunits: KdpA, KdpB and KdpC.

Its subcellular location is the cell membrane. In terms of biological role, part of the high-affinity ATP-driven potassium transport (or Kdp) system, which catalyzes the hydrolysis of ATP coupled with the electrogenic transport of potassium into the cytoplasm. This subunit acts as a catalytic chaperone that increases the ATP-binding affinity of the ATP-hydrolyzing subunit KdpB by the formation of a transient KdpB/KdpC/ATP ternary complex. In Bacillus cereus (strain ATCC 14579 / DSM 31 / CCUG 7414 / JCM 2152 / NBRC 15305 / NCIMB 9373 / NCTC 2599 / NRRL B-3711), this protein is Potassium-transporting ATPase KdpC subunit.